A 343-amino-acid chain; its full sequence is ATP-dependent (S)-NAD(P)H-hydrate dehydratase (343 aa).

The N-terminal 42 residues, 1-42 (MAVHACGAAAAVVALLSAAIALQWSPLYAVLQRALSLHTAHA), are a transit peptide targeting the mitochondrion. The 292-residue stretch at 49–340 (LFQLVRNIVP…TEVGTAFSRL (292 aa)) folds into the YjeF C-terminal domain. Lys63 carries the N6-acetyllysine modification. Tyr81 carries the phosphotyrosine modification. Residues Gly149 and 202–208 (NHVEFSR) contribute to the (6S)-NADPHX site. Phosphoserine is present on Ser216. ATP-binding positions include 242-246 (KGEQD) and 261-270 (GSSRRCGGQG). Residue Asp271 coordinates (6S)-NADPHX.

This sequence belongs to the NnrD/CARKD family. The cofactor is Mg(2+).

It localises to the mitochondrion. The enzyme catalyses (6S)-NADHX + ATP = ADP + phosphate + NADH + H(+). The catalysed reaction is (6S)-NADPHX + ATP = ADP + phosphate + NADPH + H(+). Functionally, catalyzes the dehydration of the S-form of NAD(P)HX at the expense of ATP, which is converted to ADP. Together with NAD(P)HX epimerase, which catalyzes the epimerization of the S- and R-forms, the enzyme allows the repair of both epimers of NAD(P)HX, a damaged form of NAD(P)H that is a result of enzymatic or heat-dependent hydration. This is ATP-dependent (S)-NAD(P)H-hydrate dehydratase from Mus musculus (Mouse).